A 588-amino-acid polypeptide reads, in one-letter code: L-fucose isomerase (588 aa).

Active-site proton acceptor residues include E335 and D359. Positions 335, 359, and 525 each coordinate Mn(2+).

This sequence belongs to the L-fucose isomerase family. It depends on Mn(2+) as a cofactor.

The protein localises to the cytoplasm. It carries out the reaction L-fucose = L-fuculose. It functions in the pathway carbohydrate degradation; L-fucose degradation; L-lactaldehyde and glycerone phosphate from L-fucose: step 1/3. In terms of biological role, converts the aldose L-fucose into the corresponding ketose L-fuculose. The chain is L-fucose isomerase from Streptococcus pneumoniae (strain ATCC 700669 / Spain 23F-1).